The sequence spans 247 residues: Cell division protein ZapD (247 aa).

This sequence belongs to the ZapD family. As to quaternary structure, interacts with FtsZ.

Its subcellular location is the cytoplasm. Its function is as follows. Cell division factor that enhances FtsZ-ring assembly. Directly interacts with FtsZ and promotes bundling of FtsZ protofilaments, with a reduction in FtsZ GTPase activity. In Escherichia coli O17:K52:H18 (strain UMN026 / ExPEC), this protein is Cell division protein ZapD.